A 176-amino-acid polypeptide reads, in one-letter code: Mediator of RNA polymerase II transcription subunit 11 (176 aa).

Positions 98–176 (SRVRELEETK…MGGDSSMSTN (79 aa)) are disordered. The segment covering 99 to 108 (RVRELEETKA) has biased composition (basic and acidic residues). Residues 124 to 154 (HAAAQQQQQQQQQQQQQQQQMQQAAQQQQQQ) show a composition bias toward low complexity.

The protein belongs to the Mediator complex subunit 11 family. Component of the Mediator complex, which may include CDK8, MED4, MED6, MED11, MED14, MED17, MED18, MED20, MED21, MED22, MED27, MED28, MED30 and MED31.

Its subcellular location is the nucleus. In terms of biological role, component of the Mediator complex, a coactivator involved in the regulated transcription of nearly all RNA polymerase II-dependent genes. Mediator functions as a bridge to convey information from gene-specific regulatory proteins to the basal RNA polymerase II transcription machinery. Mediator is recruited to promoters by direct interactions with regulatory proteins and serves as a scaffold for the assembly of a functional pre-initiation complex with RNA polymerase II and the general transcription factors. This Drosophila melanogaster (Fruit fly) protein is Mediator of RNA polymerase II transcription subunit 11 (MED11).